Consider the following 645-residue polypeptide: Meiosis induction protein kinase IME2/SME1 (645 aa).

The disordered stretch occupies residues 1-24 (MVEKRSRQSSSSGSEFSVPPDVDN). Residues 8 to 17 (QSSSSGSEFS) are compositionally biased toward low complexity. The 349-residue stretch at 38–386 (YQLIEKLGAG…AQELCEMPFF (349 aa)) folds into the Protein kinase domain. ATP-binding positions include 44-52 (LGAGSFGCV) and lysine 67. Residue aspartate 193 is the Proton acceptor of the active site.

This sequence belongs to the protein kinase superfamily. Ser/Thr protein kinase family.

It catalyses the reaction L-seryl-[protein] + ATP = O-phospho-L-seryl-[protein] + ADP + H(+). The enzyme catalyses L-threonyl-[protein] + ATP = O-phospho-L-threonyl-[protein] + ADP + H(+). Functionally, protein kinase which is essential for the initiation of meiosis and sporulation. This Saccharomyces cerevisiae (strain ATCC 204508 / S288c) (Baker's yeast) protein is Meiosis induction protein kinase IME2/SME1 (IME2).